The chain runs to 452 residues: Protein MLF3 (452 aa).

Phosphoserine occurs at positions 8, 11, 14, 56, 74, and 79. Residues 61–94 (SGSEVRTPSLRKNSNNVSSPLDNVIPTSRSASNS) form a disordered region. A compositionally biased stretch (polar residues) spans 64-81 (EVRTPSLRKNSNNVSSPL). Thr-121 is subject to Phosphothreonine. 3 positions are modified to phosphoserine: Ser-145, Ser-156, and Ser-160. Residue Thr-169 is modified to Phosphothreonine. Position 171 is a phosphoserine (Ser-171). Over residues 171 to 182 (SATLPSSESSPA) the composition is skewed to polar residues. Residues 171 to 220 (SATLPSSESSPASPDLKLSRSHSHSAATRPTLNNINNTGMTTTTSNGEPN) are disordered. Thr-173 is subject to Phosphothreonine. Ser-183 and Ser-189 each carry phosphoserine. Residues 201-216 (TLNNINNTGMTTTTSN) show a composition bias toward low complexity. Residue Tyr-227 is modified to Phosphotyrosine. A phosphoserine mark is found at Ser-228, Ser-257, and Ser-265. 2 disordered regions span residues 290 to 321 (PATS…NRSS) and 348 to 402 (IESS…AIGK). Tyr-295 is subject to Phosphotyrosine. Phosphoserine occurs at positions 297, 320, and 353. Residues 299 to 321 (QQSARQYSNNANNNAKSPKNRSS) show a composition bias toward low complexity. A compositionally biased stretch (low complexity) spans 365 to 383 (PSFPLSSSLRSSANLASNP). Residues 384 to 398 (ELATQTPLSTSSSYT) are compositionally biased toward polar residues. Ser-439 is subject to Phosphoserine.

It to yeast VHS2.

It is found in the cytoplasm. In Saccharomyces cerevisiae (strain ATCC 204508 / S288c) (Baker's yeast), this protein is Protein MLF3 (MLF3).